The following is a 213-amino-acid chain: HTH-type transcriptional regulator SrpR (213 aa).

One can recognise an HTH tetR-type domain in the interval 10 to 70; sequence EETRQRIIDA…AVLASRQHPL (61 aa). The segment at residues 33-52 is a DNA-binding region (H-T-H motif); sequence TLDQIARKAGVTRGAVYWHF.

In terms of biological role, in conjunction with SrpS represses the srpABC operon. The protein is HTH-type transcriptional regulator SrpR (srpR) of Pseudomonas putida (Arthrobacter siderocapsulatus).